A 1395-amino-acid chain; its full sequence is DNA-directed RNA polymerase subunit beta' (1395 aa).

4 residues coordinate Zn(2+): Cys-70, Cys-72, Cys-85, and Cys-88. Mg(2+) is bound by residues Asp-461, Asp-463, and Asp-465. The Zn(2+) site is built by Cys-815, Cys-889, Cys-896, and Cys-899.

It belongs to the RNA polymerase beta' chain family. The RNAP catalytic core consists of 2 alpha, 1 beta, 1 beta' and 1 omega subunit. When a sigma factor is associated with the core the holoenzyme is formed, which can initiate transcription. It depends on Mg(2+) as a cofactor. Zn(2+) serves as cofactor.

It carries out the reaction RNA(n) + a ribonucleoside 5'-triphosphate = RNA(n+1) + diphosphate. DNA-dependent RNA polymerase catalyzes the transcription of DNA into RNA using the four ribonucleoside triphosphates as substrates. This chain is DNA-directed RNA polymerase subunit beta', found in Ruthia magnifica subsp. Calyptogena magnifica.